A 309-amino-acid chain; its full sequence is GDP-6-deoxy-D-mannose reductase (309 aa).

Residues phenylalanine 11–valine 12, arginine 32, aspartate 47–isoleucine 48, and alanine 71–serine 73 each bind NADP(+). Serine 114–serine 115 provides a ligand contact to substrate. Tyrosine 140 contributes to the NADP(+) binding site. Residues asparagine 169, aspartate 183, arginine 209, and arginine 269–glutamate 272 contribute to the substrate site.

This sequence belongs to the NAD(P)-dependent epimerase/dehydratase family. GDP-6-deoxy-D-mannose reductase subfamily.

It catalyses the reaction GDP-alpha-D-rhamnose + NAD(+) = GDP-4-dehydro-alpha-D-rhamnose + NADH + H(+). It carries out the reaction GDP-alpha-D-rhamnose + NADP(+) = GDP-4-dehydro-alpha-D-rhamnose + NADPH + H(+). In terms of biological role, reductase that catalyzes the conversion of GDP-6-deoxy-D-mannose to GDP-4-dehydro-6-deoxy-D-mannose (GDP-D-rhamnose). The protein is GDP-6-deoxy-D-mannose reductase (rmd) of Aneurinibacillus thermoaerophilus.